The chain runs to 391 residues: Casein kinase II subunit alpha (391 aa).

The segment at Q36–L41 is interaction with beta subunit. A Protein kinase domain is found at Y39 to F324. ATP contacts are provided by residues L45 to V53 and K68. D156 functions as the Proton acceptor in the catalytic mechanism. T344 and T360 each carry phosphothreonine; by CDK1. 2 positions are modified to phosphoserine; by CDK1: S362 and S370.

This sequence belongs to the protein kinase superfamily. Ser/Thr protein kinase family. CK2 subfamily. In terms of assembly, heterotetramer composed of two catalytic subunits (alpha chain and/or alpha' chain) and two regulatory subunits (beta chains). The tetramer can exist as a combination of 2 alpha/2 beta, 2 alpha'/2 beta or 1 alpha/1 alpha'/2 beta subunits. Also part of a CK2-SPT16-SSRP1 complex composed of SSRP1, SUPT16H, CSNK2A1, CSNK2A2 and CSNK2B, which forms following UV irradiation. Interacts with RNPS1. Interacts with SNAI1. Interacts with PML. Interacts with CCAR2. Interacts with HIRIP3. In terms of processing, phosphorylated at Thr-344, Thr-360, Ser-362 and Ser-370 by CDK1 in prophase and metaphase and dephosphorylated during anaphase. Phosphorylation does not directly affect casein kinase 2 activity, but may contribute to its regulation by forming binding sites for interacting proteins and/or targeting it to different compartments.

The protein resides in the nucleus. The enzyme catalyses L-seryl-[protein] + ATP = O-phospho-L-seryl-[protein] + ADP + H(+). It carries out the reaction L-threonyl-[protein] + ATP = O-phospho-L-threonyl-[protein] + ADP + H(+). With respect to regulation, constitutively active protein kinase whose activity is not directly affected by phosphorylation. Seems to be regulated by level of expression and localization. Functionally, catalytic subunit of a constitutively active serine/threonine-protein kinase complex that phosphorylates a large number of substrates containing acidic residues C-terminal to the phosphorylated serine or threonine. Regulates numerous cellular processes, such as cell cycle progression, apoptosis and transcription, as well as viral infection. May act as a regulatory node which integrates and coordinates numerous signals leading to an appropriate cellular response. During mitosis, functions as a component of the p53/TP53-dependent spindle assembly checkpoint (SAC) that maintains cyclin-B-CDK1 activity and G2 arrest in response to spindle damage. Also required for p53/TP53-mediated apoptosis, phosphorylating 'Ser-392' of p53/TP53 following UV irradiation. Phosphorylates a number of DNA repair proteins in response to DNA damage, such as MDC1, MRE11, RAD9A, RAD51 and HTATSF1, promoting their recruitment to DNA damage sites. Can also negatively regulate apoptosis. Phosphorylates the caspases CASP9 and CASP2 and the apoptotic regulator NOL3. Phosphorylation protects CASP9 from cleavage and activation by CASP8, and inhibits the dimerization of CASP2 and activation of CASP8. Phosphorylates YY1, protecting YY1 from cleavage by CASP7 during apoptosis. Regulates transcription by direct phosphorylation of RNA polymerases I, II, III and IV. Also phosphorylates and regulates numerous transcription factors including NF-kappa-B, STAT1, CREB1, IRF1, IRF2, ATF1, ATF4, SRF, MAX, JUN, FOS, MYC and MYB. Phosphorylates Hsp90 and its co-chaperones FKBP4 and CDC37, which is essential for chaperone function. Mediates sequential phosphorylation of FNIP1, promoting its gradual interaction with Hsp90, leading to activate both kinase and non-kinase client proteins of Hsp90. Regulates Wnt signaling by phosphorylating CTNNB1 and the transcription factor LEF1. Acts as an ectokinase that phosphorylates several extracellular proteins. Phosphorylates PML at 'Ser-565' and primes it for ubiquitin-mediated degradation. Plays an important role in the circadian clock function by phosphorylating BMAL1 at 'Ser-90' which is pivotal for its interaction with CLOCK and which controls CLOCK nuclear entry. Phosphorylates FMR1, promoting FMR1-dependent formation of a membraneless compartment. May phosphorylate histone H2A on 'Ser-1'. The chain is Casein kinase II subunit alpha (CSNK2A1) from Oryctolagus cuniculus (Rabbit).